The following is an 89-amino-acid chain: Ragulator complex protein LAMTOR5 homolog (89 aa).

Belongs to the LAMTOR5 family. Part of the Ragulator complex.

It is found in the cytoplasm. The protein resides in the lysosome. Its function is as follows. Regulator of the TOR pathway, a signaling cascade that promotes cell growth in response to growth factors, energy levels, and amino acids. As part of the Ragulator complex, may activate the TOR signaling cascade in response to amino acids. This chain is Ragulator complex protein LAMTOR5 homolog, found in Dictyostelium discoideum (Social amoeba).